A 304-amino-acid chain; its full sequence is Non-specific ribonucleoside hydrolase RihC (304 aa).

His233 is an active-site residue.

It belongs to the IUNH family. RihC subfamily.

In terms of biological role, hydrolyzes both purine and pyrimidine ribonucleosides with a broad-substrate specificity. This chain is Non-specific ribonucleoside hydrolase RihC, found in Escherichia fergusonii (strain ATCC 35469 / DSM 13698 / CCUG 18766 / IAM 14443 / JCM 21226 / LMG 7866 / NBRC 102419 / NCTC 12128 / CDC 0568-73).